The following is a 252-amino-acid chain: Sororin (252 aa).

2 disordered regions span residues 1–48 (MSGR…WPKT) and 72–142 (AVQS…SKKV). Phosphoserine is present on residues S21, S33, S35, S75, S79, and S83. Basic and acidic residues predominate over residues 86 to 104 (LEKENEPPGRELTKEDLFK). The KEN box motif lies at 88–90 (KEN). Position 98 is a phosphothreonine (T98). Residues 105–116 (THSVPATPTSTP) show a composition bias toward low complexity. S107 carries the post-translational modification Phosphoserine. T111 and T115 each carry phosphothreonine. A compositionally biased stretch (basic and acidic residues) spans 124–140 (SSSKEGELDARDLEMSK). A Phosphoserine modification is found at S154. Phosphothreonine is present on T159. The FGF motif motif lies at 166 to 168 (FGF). Residues 199 to 222 (WAPDMTLPGISPPPEKQKRKKKKM) form a disordered region. S209 is modified (phosphoserine). The segment at 230 to 252 (LDEWAAAMNAEFEAAEQFDLLVE) is C-terminal Sororin domain.

This sequence belongs to the sororin family. Interacts with the APC/C complex. Interacts with the chromatin-bound cohesin complex; the interaction is indirect, occurs after DNA replication and requires acetylation of the cohesin component SMC3. Interacts (via the FGF motif) with PDS5A and PDS5B; the interaction is direct and prevents the interaction of PDS5A with WAPL. In terms of processing, phosphorylated. Phosphorylation, as cells enter mitosis, disrupts the interaction with PDS5A and relieves the inhibition of WAPL by CDCA5. Ubiquitinated by the APC/C complex in G1, leading to its degradation.

Its subcellular location is the nucleus. It is found in the chromosome. The protein resides in the cytoplasm. In terms of biological role, regulator of sister chromatid cohesion in mitosis stabilizing cohesin complex association with chromatin. May antagonize the action of WAPL which stimulates cohesin dissociation from chromatin. Cohesion ensures that chromosome partitioning is accurate in both meiotic and mitotic cells and plays an important role in DNA repair. Required for efficient DNA double-stranded break repair. The sequence is that of Sororin (CDCA5) from Homo sapiens (Human).